We begin with the raw amino-acid sequence, 371 residues long: DNA replication and repair protein RecF (371 aa).

30–37 (GANAQGKT) lines the ATP pocket.

It belongs to the RecF family.

Its subcellular location is the cytoplasm. Functionally, the RecF protein is involved in DNA metabolism; it is required for DNA replication and normal SOS inducibility. RecF binds preferentially to single-stranded, linear DNA. It also seems to bind ATP. The chain is DNA replication and repair protein RecF from Lacticaseibacillus casei (strain BL23) (Lactobacillus casei).